The following is a 189-amino-acid chain: Parkinson disease protein 7 homolog (189 aa).

N-acetylalanine is present on Ala-2. 2 S-palmitoyl cysteine lipidation sites follow: Cys-46 and Cys-53. Tyr-67 is subject to Phosphotyrosine. The Nucleophile role is filled by Cys-106. Position 106 is a cysteine sulfinic acid (-SO2H); alternate (Cys-106). Cys-106 carries the S-palmitoyl cysteine; alternate lipid modification. His-126 is an active-site residue. Lys-130 participates in a covalent cross-link: Glycyl lysine isopeptide (Lys-Gly) (interchain with G-Cter in SUMO). Lys-148 carries the post-translational modification N6-acetyllysine. An N6-succinyllysine modification is found at Lys-182.

It belongs to the peptidase C56 family. In terms of assembly, homodimer. Binds EFCAB6/DJBP and PIAS2. Part of a ternary complex containing PARK7, EFCAB6/DJBP and AR. Binds to HIPK1. Interacts (via N-terminus) with OTUD7B. Interacts with BBS1, CLCF1 and MTERF. Interacts (via C-terminus) with NCF1; the interaction is enhanced by LPS and modulates NCF1 phosphorylation and membrane translocation. Interacts with NENF. The cofactor is Deglycase activity does not require glutathione as a cofactor, however, glycated glutathione constitutes a PARK7 substrate.. In terms of processing, sumoylated on Lys-130 by PIAS2 or PIAS4; which is essential for cell-growth promoting activity and transforming activity. Undergoes cleavage of a C-terminal peptide and subsequent activation of protease activity in response to oxidative stress. Expressed in erythroblasts and in mature red blood cells from peripheral blood (at protein level). In pancreas, expression is higher in islets than surrounding exocrine tissues.

The protein localises to the cell membrane. It is found in the cytoplasm. The protein resides in the membrane raft. Its subcellular location is the nucleus. It localises to the mitochondrion. The protein localises to the endoplasmic reticulum. It catalyses the reaction N(omega)-(1-hydroxy-2-oxopropyl)-L-arginyl-[protein] + H2O = lactate + L-arginyl-[protein] + H(+). It carries out the reaction N(6)-(1-hydroxy-2-oxopropyl)-L-lysyl-[protein] + H2O = lactate + L-lysyl-[protein] + H(+). The catalysed reaction is S-(1-hydroxy-2-oxopropyl)-L-cysteinyl-[protein] + H2O = lactate + L-cysteinyl-[protein] + H(+). The enzyme catalyses N(omega)-(1-hydroxy-2-oxoethyl)-L-arginyl-[protein] + H2O = L-arginyl-[protein] + glycolate + H(+). It catalyses the reaction N(6)-(1-hydroxy-2-oxoethyl)-L-lysyl-[protein] + H2O = glycolate + L-lysyl-[protein] + H(+). It carries out the reaction S-(1-hydroxy-2-oxoethyl)-L-cysteinyl-[protein] + H2O = glycolate + L-cysteinyl-[protein] + H(+). The catalysed reaction is N(2)-(1-hydroxy-2-oxopropyl)-dGTP + H2O = lactate + dGTP + H(+). The enzyme catalyses N(2)-(1-hydroxy-2-oxopropyl)-GTP + H2O = lactate + GTP + H(+). It catalyses the reaction N(2)-(1-hydroxy-2-oxopropyl)-GDP + H2O = lactate + GDP + H(+). It carries out the reaction N(2)-(1-hydroxy-2-oxopropyl)-GMP + H2O = lactate + GMP + H(+). The catalysed reaction is N(2)-(1-hydroxy-2-oxoethyl)-dGTP + H2O = dGTP + glycolate + H(+). The enzyme catalyses N(2)-(1-hydroxy-2-oxoethyl)-GTP + H2O = glycolate + GTP + H(+). It catalyses the reaction N(2)-(1-hydroxy-2-oxoethyl)-GDP + H2O = glycolate + GDP + H(+). It carries out the reaction N(2)-(1-hydroxy-2-oxoethyl)-GMP + H2O = glycolate + GMP + H(+). The catalysed reaction is an N(2)-(1-hydroxy-2-oxopropyl)-guanosine in RNA + H2O = a guanosine in RNA + lactate + H(+). The enzyme catalyses an N(2)-(1-hydroxy-2-oxopropyl)-2'-deoxyguanosine in DNA + H2O = a 2'-deoxyguanosine in DNA + lactate + H(+). It catalyses the reaction an N(2)-(1-hydroxy-2-oxoethyl)-guanosine in RNA + H2O = a guanosine in RNA + glycolate + H(+). It carries out the reaction an N(2)-(1-hydroxy-2-oxoethyl)-2'-deoxyguanosine in DNA + H2O = a 2'-deoxyguanosine in DNA + glycolate + H(+). Functionally, multifunctional protein with controversial molecular function which plays an important role in cell protection against oxidative stress and cell death acting as oxidative stress sensor and redox-sensitive chaperone and protease. It is involved in neuroprotective mechanisms like the stabilization of NFE2L2 and PINK1 proteins, male fertility as a positive regulator of androgen signaling pathway as well as cell growth and transformation through, for instance, the modulation of NF-kappa-B signaling pathway. Has been described as a protein and nucleotide deglycase that catalyzes the deglycation of the Maillard adducts formed between amino groups of proteins or nucleotides and reactive carbonyl groups of glyoxals. But this function is rebuted by other works. As a protein deglycase, repairs methylglyoxal- and glyoxal-glycated proteins, and releases repaired proteins and lactate or glycolate, respectively. Deglycates cysteine, arginine and lysine residues in proteins, and thus reactivates these proteins by reversing glycation by glyoxals. Acts on early glycation intermediates (hemithioacetals and aminocarbinols), preventing the formation of advanced glycation endproducts (AGE) that cause irreversible damage. Also functions as a nucleotide deglycase able to repair glycated guanine in the free nucleotide pool (GTP, GDP, GMP, dGTP) and in DNA and RNA. Is thus involved in a major nucleotide repair system named guanine glycation repair (GG repair), dedicated to reversing methylglyoxal and glyoxal damage via nucleotide sanitization and direct nucleic acid repair. Protects histones from adduction by methylglyoxal, controls the levels of methylglyoxal-derived argininine modifications on chromatin. Able to remove the glycations and restore histone 3, histone glycation disrupts both local and global chromatin architecture by altering histone-DNA interactions as well as histone acetylation and ubiquitination levels. Displays a very low glyoxalase activity that may reflect its deglycase activity. Eliminates hydrogen peroxide and protects cells against hydrogen peroxide-induced cell death. Required for correct mitochondrial morphology and function as well as for autophagy of dysfunctional mitochondria. Plays a role in regulating expression or stability of the mitochondrial uncoupling proteins SLC25A14 and SLC25A27 in dopaminergic neurons of the substantia nigra pars compacta and attenuates the oxidative stress induced by calcium entry into the neurons via L-type channels during pacemaking. Regulates astrocyte inflammatory responses, may modulate lipid rafts-dependent endocytosis in astrocytes and neuronal cells. In pancreatic islets, involved in the maintenance of mitochondrial reactive oxygen species (ROS) levels and glucose homeostasis in an age- and diet dependent manner. Protects pancreatic beta cells from cell death induced by inflammatory and cytotoxic setting. Binds to a number of mRNAs containing multiple copies of GG or CC motifs and partially inhibits their translation but dissociates following oxidative stress. Metal-binding protein able to bind copper as well as toxic mercury ions, enhances the cell protection mechanism against induced metal toxicity. In macrophages, interacts with the NADPH oxidase subunit NCF1 to direct NADPH oxidase-dependent ROS production, and protects against sepsis. The polypeptide is Parkinson disease protein 7 homolog (Mus musculus (Mouse)).